The primary structure comprises 208 residues: Uracil phosphoribosyltransferase (208 aa).

Residues Arg77, Arg102, and 129 to 137 contribute to the 5-phospho-alpha-D-ribose 1-diphosphate site; that span reads DPMLATGNS. Uracil is bound by residues Ile193 and 198-200; that span reads GDA. Asp199 serves as a coordination point for 5-phospho-alpha-D-ribose 1-diphosphate.

This sequence belongs to the UPRTase family. The cofactor is Mg(2+).

The enzyme catalyses UMP + diphosphate = 5-phospho-alpha-D-ribose 1-diphosphate + uracil. It participates in pyrimidine metabolism; UMP biosynthesis via salvage pathway; UMP from uracil: step 1/1. Its activity is regulated as follows. Allosterically activated by GTP. In terms of biological role, catalyzes the conversion of uracil and 5-phospho-alpha-D-ribose 1-diphosphate (PRPP) to UMP and diphosphate. In Mycoplasmopsis pulmonis (strain UAB CTIP) (Mycoplasma pulmonis), this protein is Uracil phosphoribosyltransferase.